The following is a 242-amino-acid chain: tRNA (guanine-N(1)-)-methyltransferase (242 aa).

S-adenosyl-L-methionine is bound by residues Gly115 and 134 to 139 (LGDFVL). The span at 210–224 (QEQREQRTAARRPDL) shows a compositional bias: basic and acidic residues. The tract at residues 210–242 (QEQREQRTAARRPDLMQRWQQRFGADNDSEHRA) is disordered.

Belongs to the RNA methyltransferase TrmD family. Homodimer.

The protein localises to the cytoplasm. It catalyses the reaction guanosine(37) in tRNA + S-adenosyl-L-methionine = N(1)-methylguanosine(37) in tRNA + S-adenosyl-L-homocysteine + H(+). Functionally, specifically methylates guanosine-37 in various tRNAs. The protein is tRNA (guanine-N(1)-)-methyltransferase of Synechococcus sp. (strain WH7803).